The following is a 70-amino-acid chain: Omega-conotoxin-like Bu1 (70 aa).

The first 22 residues, 1–22, serve as a signal peptide directing secretion; that stretch reads MKLTCVAIVAVLLLTACQLITA. A propeptide spanning residues 23-45 is cleaved from the precursor; sequence EDSRGTQLHRALRKTTKLSVSTR. Intrachain disulfides connect C46-C61, C53-C65, and C60-C70.

The protein belongs to the conotoxin O1 superfamily. As to expression, expressed by the venom duct.

The protein localises to the secreted. Omega-conotoxins act at presynaptic membranes, they bind and block voltage-gated calcium channels (Cav). This is Omega-conotoxin-like Bu1 from Conus bullatus (Bubble cone).